We begin with the raw amino-acid sequence, 121 residues long: Small ribosomal subunit protein uS13 (121 aa).

A disordered region spans residues 92 to 121 (RKGLPMRGQRTRTNARTRKGPRRAAQALKK).

Belongs to the universal ribosomal protein uS13 family. As to quaternary structure, part of the 30S ribosomal subunit. Forms a loose heterodimer with protein S19. Forms two bridges to the 50S subunit in the 70S ribosome.

Located at the top of the head of the 30S subunit, it contacts several helices of the 16S rRNA. In the 70S ribosome it contacts the 23S rRNA (bridge B1a) and protein L5 of the 50S subunit (bridge B1b), connecting the 2 subunits; these bridges are implicated in subunit movement. Contacts the tRNAs in the A and P-sites. This is Small ribosomal subunit protein uS13 from Burkholderia cenocepacia (strain ATCC BAA-245 / DSM 16553 / LMG 16656 / NCTC 13227 / J2315 / CF5610) (Burkholderia cepacia (strain J2315)).